The sequence spans 216 residues: GTP cyclohydrolase 1 (216 aa).

Residues Cys-109, His-112, and Cys-180 each contribute to the Zn(2+) site.

It belongs to the GTP cyclohydrolase I family. As to quaternary structure, toroid-shaped homodecamer, composed of two pentamers of five dimers.

It carries out the reaction GTP + H2O = 7,8-dihydroneopterin 3'-triphosphate + formate + H(+). It functions in the pathway cofactor biosynthesis; 7,8-dihydroneopterin triphosphate biosynthesis; 7,8-dihydroneopterin triphosphate from GTP: step 1/1. This is GTP cyclohydrolase 1 from Wigglesworthia glossinidia brevipalpis.